Here is a 1463-residue protein sequence, read N- to C-terminus: Nucleoporin NUP152 (1463 aa).

3 disordered regions span residues 1–199 (MDPP…GRPG), 339–568 (GIPD…ELPA), and 609–1064 (TTKK…FGNT). Composition is skewed to polar residues over residues 32 to 42 (STNSNSVTANA), 81 to 92 (GPSSKLSQSVSA), 144 to 155 (TSSKATSFSGAP), 175 to 191 (TTYTQRVSSHPLTQSFP), 367 to 378 (PSSSTFTHTASP), and 416 to 472 (PAKT…SSNI). Positions 481–498 (KDEDNESDTGSEAEAEDE) are enriched in acidic residues. Low complexity-rich tracts occupy residues 511–523 (GASSSAPSEGGES) and 616–630 (AAAPAEAPKEATPTT). Polar residues-rich tracts occupy residues 651-664 (IFGSTTNPTETSIP), 673-689 (PATSTTNSLFGATTSAA), and 720-746 (TTESPKTNLFQFGTPNKTETAPATQPQ). The stretch at 729-732 (FQFG) is one FXFG 1 repeat. Residues 753–768 (KPPSTETPTEKPATTS) are compositionally biased toward low complexity. A compositionally biased stretch (polar residues) spans 777–789 (PATTSSLFGSATT). Low complexity predominate over residues 803–813 (TTTPADKPTTT). Residues 814–828 (NLFGSTSTQATSGSD) show a composition bias toward polar residues. An FXFG 2 repeat occupies 835–838 (FAFG). A compositionally biased stretch (polar residues) spans 840-863 (TTESKPTTSLFGSTTPAPATSTEN). Over residues 870–881 (ATTTSATPATNT) the composition is skewed to low complexity. Polar residues-rich tracts occupy residues 900 to 923 (GSSTTTAAPVFQFGSTPASTSTEQ), 940 to 961 (GSTSATSTEQKPLFGSSTTMTE), 968 to 987 (SISTTATEQKPLFGSTSTTE), 998 to 1029 (STEQKSLFGITPSTTENNPASIFGNSSTSTEQ), and 1037 to 1055 (PASTEQKPLFGSTPSTTEN). An FXFG 3 repeat occupies 910 to 913 (FQFG). FXFG repeat units lie at residues 1074-1077 (FNFG), 1127-1130 (FNFG), 1141-1144 (FTFG), and 1152-1155 (FTFG). Disordered stretches follow at residues 1155–1174 (GASSDSSNASNNASSAPIFS) and 1179–1217 (QPSSTPLFGQNNPPAASNIFASSLAPVGGTSTGTSKHVP). The span at 1156–1170 (ASSDSSNASNNASSA) shows a compositional bias: low complexity. An FXFG 8 repeat occupies 1173 to 1176 (FSFG). Positions 1179-1199 (QPSSTPLFGQNNPPAASNIFA) are enriched in polar residues. Residues 1236–1239 (FTFG) form an FXFG 9 repeat. A compositionally biased stretch (low complexity) spans 1240–1271 (GASSLATTPAASTPEPSAANAAAAGEDQGASA). 2 disordered regions span residues 1240–1335 (GASS…PWKV) and 1416–1463 (AALE…DEKK). The RanBD1 domain maps to 1289-1427 (GEEDESVVHE…LEEHKKANEK (139 aa)). The segment covering 1418 to 1463 (LEEHKKANEKKDGEKNEESEKKDEKQEEKKNEEKKDEKEEKKDEKK) has biased composition (basic and acidic residues).

The nuclear pore complex (NPC) constitutes the exclusive means of nucleocytoplasmic transport. NPCs allow the passive diffusion of ions and small molecules and the active, nuclear transport receptor-mediated bidirectional transport of macromolecules such as proteins, RNAs, ribonucleoparticles (RNPs), and ribosomal subunits across the nuclear envelope. The 55-60 MDa NPC is composed of at least 28 different subunits: AMO1, ELYS, GLE1, GLE2, MLP1, NDC1, NIC96, NSP1, NUP133, NUP145, NUP152, NUP159, NUP170, NUP188, NUP192, NUP37, NUP49, NUP53, NUP56, NUP57, NUP82, NUP84, NUP85, POM152, POM33, POM34, SEC13 and SEH1. Due to its 8-fold rotational symmetry, all subunits are present with 8 copies or multiples thereof.

The protein localises to the nucleus. It is found in the nuclear pore complex. The protein resides in the nucleus membrane. Functionally, functions as a component of the nuclear pore complex (NPC). NPC components, collectively referred to as nucleoporins (NUPs), can play the role of both NPC structural components and of docking or interaction partners for transiently associated nuclear transport factors. Active directional transport is assured by both, a Phe-Gly (FG) repeat affinity gradient for these transport factors across the NPC and a transport cofactor concentration gradient across the nuclear envelope (GSP1 and GSP2 GTPases associated predominantly with GTP in the nucleus, with GDP in the cytoplasm). This is Nucleoporin NUP152 (NUP152) from Chaetomium thermophilum (strain DSM 1495 / CBS 144.50 / IMI 039719) (Thermochaetoides thermophila).